The following is a 47-amino-acid chain: Conotoxin reg3.11 (47 aa).

Residues 1–31 (DQPVERHAENKRHLIPAVMRAMTMNADRRVQ) constitute a propeptide that is removed on maturation. 3 disulfide bridges follow: Cys32–Cys44, Cys33–Cys42, and Cys38–Cys45. Residues 46-47 (YH) constitute a propeptide that is removed on maturation.

The protein belongs to the conotoxin M superfamily. In terms of tissue distribution, expressed by the venom duct.

It is found in the secreted. The polypeptide is Conotoxin reg3.11 (Conus regius (Crown cone)).